A 63-amino-acid chain; its full sequence is Large ribosomal subunit protein bL35 (63 aa).

It belongs to the bacterial ribosomal protein bL35 family.

The sequence is that of Large ribosomal subunit protein bL35 from Campylobacter jejuni (strain RM1221).